The sequence spans 86 residues: High affinity immunoglobulin epsilon receptor subunit gamma (86 aa).

Positions 1–18 (MYPAVVLLLLLLVEQAAA) are cleaved as a signal peptide. Residues 19-23 (LGEPQ) are Extracellular-facing. A helical membrane pass occupies residues 24–44 (LCYILDAILFLYGIILTLLYC). At 45–86 (RLKIQVRKATVASYEKPDGIYTGLSTRNQETYETLKHEKPPQ) the chain is on the cytoplasmic side. The 29-residue stretch at 54-82 (TVASYEKPDGIYTGLSTRNQETYETLKHE) folds into the ITAM domain. Phosphotyrosine is present on Tyr-65. A Phosphoserine modification is found at Ser-69. Tyr-76 carries the phosphotyrosine modification. Thr-78 carries the post-translational modification Phosphothreonine.

Belongs to the CD3Z/FCER1G family. IgE Fc receptor is a tetramer of an alpha chain, a beta chain, and two disulfide linked gamma chains. Associates with FCGR1A; forms a functional signaling complex. The signaling subunit of immunoglobulin gamma (IgG) Fc receptor complex. As a homodimer or a heterodimer of CD247 and FCER1G, associates with the ligand binding subunit FCGR3A to form a functional receptor complex. Associates with CLEC6A. Interacts with CLEC4E. Interacts (via ITAM domain) with SYK (via SH2 domains); activates SYK, enabling integrin-mediated activation of neutrophils and macrophages. Interacts with CSF2RB and recruits SYK in response to IL3 stimulation; this interaction is direct. Interacts with CD300LH; the interaction may be indirect. Interacts with CD300LD. Interacts with TARM1.

The protein resides in the cell membrane. In terms of biological role, adapter protein containing an immunoreceptor tyrosine-based activation motif (ITAM) that transduces activation signals from various immunoreceptors. As a component of the high-affinity immunoglobulin E (IgE) receptor, mediates allergic inflammatory signaling in mast cells. As a constitutive component of interleukin-3 receptor complex, selectively mediates interleukin 4/IL4 production by basophils priming T-cells toward effector T-helper 2 subset. Associates with pattern recognition receptors CLEC4D and CLEC4E to form a functional signaling complex in myeloid cells. Binding of mycobacterial trehalose 6,6'-dimycolate (TDM) to this receptor complex leads to phosphorylation of ITAM, triggering activation of SYK, CARD9 and NF-kappa-B, consequently driving maturation of antigen-presenting cells and shaping antigen-specific priming of T-cells toward effector T-helper 1 and T-helper 17 cell subtypes. May function cooperatively with other activating receptors. Functionally linked to integrin beta-2/ITGB2-mediated neutrophil activation. Also involved in integrin alpha-2/ITGA2-mediated platelet activation. The chain is High affinity immunoglobulin epsilon receptor subunit gamma (FCER1G) from Cavia porcellus (Guinea pig).